Reading from the N-terminus, the 1154-residue chain is BEACH domain-containing protein lvsF (1154 aa).

Disordered stretches follow at residues 92-123 and 139-167; these read HLPTPQPIPQSILSPSKPTPTPTPPIVVEQPS and TSKVTTPTPPTPTPTPPTPQPTSIAPTPT. Pro residues predominate over residues 145–158; it reads PTPPTPTPTPPTPQ. Positions 289 to 384 constitute a BEACH-type PH domain; sequence DMNERNILEL…TRNQVYDLLV (96 aa). The 309-residue stretch at 389 to 697 folds into the BEACH domain; the sequence is TNIMHINEQA…QIFKTPHPQR (309 aa). Disordered regions lie at residues 554-575, 739-762, and 779-825; these read SFESSSSSRNGGGGDDDDNFEN, NNLNNNNNNNNNNNSNSNSNLNNN, and NSLN…ENLN. 2 stretches are compositionally biased toward low complexity: residues 779-788 and 795-822; these read NSLNNENNEN and NSNSNSSDNIKNSNGFENNDNNFNNENE. 7 WD repeats span residues 858 to 897, 900 to 939, 942 to 980, 992 to 1031, 1034 to 1074, 1076 to 1110, and 1119 to 1154; these read LHKDKISALYLSNNSETIYSVSLDSCLKIYSLKEKRQIRS, LCNLALSSFQLSKDEKYIIIGSWDNNIYVYSVGNGSISYS, GHSDAVSCLKLHNNNILVSGSWDSSVKVWRTHRQSNGAI, DSDTEIRSIDISSNGTIFCAGSSDGYLYFYDLLTLQLIRR, CFFD…FSFK, KGEIHCLDSDGSSLIIGTDRGLCLWSLTTGTEIKD, and SSNESIHSLNVSINQSSNKPILLTGTEAGSISIWQQ.

The chain is BEACH domain-containing protein lvsF (lvsF) from Dictyostelium discoideum (Social amoeba).